The sequence spans 290 residues: Acetylglutamate kinase (290 aa).

Residues 72–73, arginine 94, and asparagine 187 contribute to the substrate site; that span reads GG.

This sequence belongs to the acetylglutamate kinase family. ArgB subfamily.

Its subcellular location is the plastid. It is found in the chloroplast. The catalysed reaction is N-acetyl-L-glutamate + ATP = N-acetyl-L-glutamyl 5-phosphate + ADP. The protein operates within amino-acid biosynthesis; L-arginine biosynthesis; N(2)-acetyl-L-ornithine from L-glutamate: step 2/4. Its function is as follows. Catalyzes the ATP-dependent phosphorylation of N-acetyl-L-glutamate. The chain is Acetylglutamate kinase from Cyanidioschyzon merolae (strain NIES-3377 / 10D) (Unicellular red alga).